Consider the following 319-residue polypeptide: Acetyl esterase (319 aa).

The Involved in the stabilization of the negatively charged intermediate by the formation of the oxyanion hole motif lies at 91–93 (HGG). Catalysis depends on residues Ser165, Asp262, and His292.

This sequence belongs to the 'GDXG' lipolytic enzyme family. As to quaternary structure, homodimer. Interacts with MalT and MelA.

The protein localises to the cytoplasm. In terms of biological role, displays esterase activity towards short chain fatty esters (acyl chain length of up to 8 carbons). Able to hydrolyze triacetylglycerol (triacetin) and tributyrylglycerol (tributyrin), but not trioleylglycerol (triolein) or cholesterol oleate. Negatively regulates MalT activity by antagonizing maltotriose binding. Inhibits MelA galactosidase activity. This Escherichia coli (strain 55989 / EAEC) protein is Acetyl esterase.